An 855-amino-acid chain; its full sequence is Spindle and centriole-associated protein 1 (855 aa).

The interval 164 to 200 is disordered; the sequence is QALNDVDGEEEGTVTSQSGESENENELDNSLNSQSNT. The residue at position 235 (Thr-235) is a Phosphothreonine. A compositionally biased stretch (basic residues) spans 300 to 311; the sequence is KPNLHALSKPKK. Positions 300-328 are disordered; the sequence is KPNLHALSKPKKNMLSGSTTSADLPNRTN. The segment covering 314–328 has biased composition (polar residues); it reads LSGSTTSADLPNRTN. The stretch at 325–437 forms a coiled coil; that stretch reads NRTNSNLDVL…TQARLRQYMV (113 aa). Phosphoserine is present on residues Ser-640 and Ser-644. Residues 725 to 751 are a coiled coil; sequence GSMEERIAELNRQSMEARGKLLQLIEQ. Ser-760, Ser-764, and Ser-819 each carry phosphoserine. Residues 789–834 form a disordered region; the sequence is EAPESSKCSTVSPVSEINTRRSSGATSNSCSPLNATSGSGRFTPLN. Positions 794 to 828 are enriched in polar residues; that stretch reads SKCSTVSPVSEINTRRSSGATSNSCSPLNATSGSG.

In terms of assembly, interacts with CEP120.

The protein localises to the cytoplasm. It localises to the cytoskeleton. It is found in the microtubule organizing center. The protein resides in the centrosome. Its subcellular location is the centriole. The protein localises to the spindle. Its function is as follows. Regulator required for centriole duplication, for proper bipolar spindle formation and chromosome congression in mitosis. The protein is Spindle and centriole-associated protein 1 (SPICE1) of Pongo abelii (Sumatran orangutan).